The sequence spans 70 residues: UPF0270 protein VV1_1320 (70 aa).

It belongs to the UPF0270 family.

This is UPF0270 protein VV1_1320 from Vibrio vulnificus (strain CMCP6).